Consider the following 308-residue polypeptide: Cap-specific mRNA (nucleoside-2'-O-)-methyltransferase (308 aa).

Residue tyrosine 30 participates in mRNA binding. The S-adenosyl-L-methionine site is built by glutamine 46, tyrosine 74, glycine 76, glycine 80, aspartate 103, arginine 105, valine 124, and aspartate 147. The segment at 177-257 (PIASSLKWRC…NTKIRPKIVL (81 aa)) is binding to NPH-I. The active-site For methyltransferase activity is lysine 183. MRNA contacts are provided by residues 185–188 (RCPF), aspartate 190, 213–215 (SAE), and glutamate 241.

It belongs to the class I-like SAM-binding methyltransferase superfamily. Poxvirus/kinetoplastid 2'-O-MTase family. In terms of assembly, interacts with poly(A) polymerase catalytic subunit OPG063. Interacts with OPG109 and OPG123; these interactions might help linking transcription to capping and polyadenylation.

It localises to the virion. It carries out the reaction a 5'-end (N(7)-methyl 5'-triphosphoguanosine)-ribonucleoside in mRNA + S-adenosyl-L-methionine = a 5'-end (N(7)-methyl 5'-triphosphoguanosine)-(2'-O-methyl-ribonucleoside) in mRNA + S-adenosyl-L-homocysteine + H(+). In terms of biological role, displays methyltransferase, positive regulation of the poly(A) polymerase and transcription elongation activities. Involved in the modification of both mRNA ends and in intermediate and late gene positive transcription elongation. At the mRNAs 5' end, methylates the ribose 2' OH group of the first transcribed nucleotide, thereby producing a 2'-O-methylpurine cap. At the 3' end, functions as a processivity factor which stimulates the activity of the viral poly(A) polymerase OPG063 that creates mRNA's poly(A) tail. In the presence of OPG102, OPG063 does not dissociate from the RNA allowing tail elongation to around 250 adenylates. In Fowlpox virus (strain NVSL) (FPV), this protein is Cap-specific mRNA (nucleoside-2'-O-)-methyltransferase (OPG102).